Reading from the N-terminus, the 133-residue chain is Agglutinin alpha chain (133 aa).

The Jacalin-type lectin domain occupies 1–133 (GKAFDDGAFT…LDYFSMYLSL (133 aa)). The segment at residues 7–64 (GAFTGIREINLSYNKETAIGDFQVVYDLNGSPYVGQNHKSFITGFTPVKISLDFPSEY) is a repeat. Residue Asn43 is glycosylated (N-linked (GlcNAc...) asparagine; when associated with variant T-45; partial). Residues 68–89 (VSGYTGNVSGYVVVRSLTFKTN) are igA-binding. N-linked (GlcNAc...) asparagine; partial glycosylation occurs at Asn74. Residues 76–130 (SGYVVVRSLTFKTNKKTYGPYGVTSGTPFNLPIENGLIVGFKGSIGYWLDYFSMY) constitute a repeat.

Belongs to the jacalin lectin family. As to quaternary structure, tetramer of four alpha chains associated with two or four beta chains.

D-galactose-specific lectin, binds the T-antigen structure Gal-beta1,3-GalNAc (Thomsen-Friedenreich-antigen-specific lectin). Potent and selective stimulant of distinct T- and B-cell functions. Shows a unique ability to specifically recognize IgA-1 from human serum. This Artocarpus integer (Jack fruit) protein is Agglutinin alpha chain.